We begin with the raw amino-acid sequence, 268 residues long: MSSALMPVRTHIVIPARLKSTRLPNKPLLTIHGKPMILWVAEKAQLADFADDMCIATDDESVAKVCAEAGFDVVMTRSDHASGTDRLAEVAAIKGWAAHDIVVNMQGDEPLIPPLLLEQVKTLLVQDAESVMATLCEPIEDYNTFIHPSVVKVVSQNTNNQQRAIYFSRAPIPCDRDVVLSDEDNTQAPKNAYRHLGLYAYRVSLLQQFVHWSQTPLEILESLEQLRVLENGGHIAIAKAACPLPAGVDTQEDLDRLNAMSLTAFQDD.

This sequence belongs to the KdsB family.

Its subcellular location is the cytoplasm. It catalyses the reaction 3-deoxy-alpha-D-manno-oct-2-ulosonate + CTP = CMP-3-deoxy-beta-D-manno-octulosonate + diphosphate. It functions in the pathway nucleotide-sugar biosynthesis; CMP-3-deoxy-D-manno-octulosonate biosynthesis; CMP-3-deoxy-D-manno-octulosonate from 3-deoxy-D-manno-octulosonate and CTP: step 1/1. It participates in bacterial outer membrane biogenesis; lipopolysaccharide biosynthesis. Functionally, activates KDO (a required 8-carbon sugar) for incorporation into bacterial lipopolysaccharide in Gram-negative bacteria. In Psychrobacter arcticus (strain DSM 17307 / VKM B-2377 / 273-4), this protein is 3-deoxy-manno-octulosonate cytidylyltransferase.